The chain runs to 291 residues: Glutathione S-transferase 2 (291 aa).

Residues 2-83 enclose the GST N-terminal domain; sequence SPVKVFGHPM…YILRKYGGTA (82 aa). Residues 41-42, 54-55, and 67-68 contribute to the glutathione site; these read HK, KM, and KS. Residues 93–223 enclose the GST C-terminal domain; that stretch reads GIEELAMVDV…RVCKHMPTEF (131 aa).

This sequence belongs to the GST superfamily. Phi family.

It catalyses the reaction RX + glutathione = an S-substituted glutathione + a halide anion + H(+). Its function is as follows. Conjugation of reduced glutathione to a wide number of exogenous and endogenous hydrophobic electrophiles. In Triticum aestivum (Wheat), this protein is Glutathione S-transferase 2 (GSTA2).